Here is a 220-residue protein sequence, read N- to C-terminus: Orotate phosphoribosyltransferase (220 aa).

K26 is a 5-phospho-alpha-D-ribose 1-diphosphate binding site. An orotate-binding site is contributed by 34 to 35; it reads FF. 5-phospho-alpha-D-ribose 1-diphosphate is bound by residues 72 to 73, R101, K102, K105, H107, and 126 to 134; these read YK and DDVITAGTS. Residues T130 and R158 each coordinate orotate.

It belongs to the purine/pyrimidine phosphoribosyltransferase family. PyrE subfamily. In terms of assembly, homodimer. It depends on Mg(2+) as a cofactor.

The enzyme catalyses orotidine 5'-phosphate + diphosphate = orotate + 5-phospho-alpha-D-ribose 1-diphosphate. The protein operates within pyrimidine metabolism; UMP biosynthesis via de novo pathway; UMP from orotate: step 1/2. Its function is as follows. Catalyzes the transfer of a ribosyl phosphate group from 5-phosphoribose 1-diphosphate to orotate, leading to the formation of orotidine monophosphate (OMP). The chain is Orotate phosphoribosyltransferase from Bordetella avium (strain 197N).